Consider the following 283-residue polypeptide: Nucleotide-binding protein IL0393 (283 aa).

ATP is bound at residue 8-15; sequence GRSGSGKT. A GTP-binding site is contributed by 56-59; sequence DVRN.

It belongs to the RapZ-like family.

Its function is as follows. Displays ATPase and GTPase activities. The chain is Nucleotide-binding protein IL0393 from Idiomarina loihiensis (strain ATCC BAA-735 / DSM 15497 / L2-TR).